The following is a 331-amino-acid chain: D-alanine--D-alanine ligase (331 aa).

An ATP-grasp domain is found at K122–E328. A152–E207 provides a ligand contact to ATP. Residues D282, E295, and N297 each contribute to the Mg(2+) site.

Belongs to the D-alanine--D-alanine ligase family. The cofactor is Mg(2+). Mn(2+) is required as a cofactor.

It is found in the cytoplasm. The catalysed reaction is 2 D-alanine + ATP = D-alanyl-D-alanine + ADP + phosphate + H(+). It functions in the pathway cell wall biogenesis; peptidoglycan biosynthesis. In terms of biological role, cell wall formation. This is D-alanine--D-alanine ligase from Vibrio vulnificus (strain CMCP6).